An 82-amino-acid polypeptide reads, in one-letter code: uncharacterized protein (82 aa).

A compositionally biased stretch (low complexity) spans 29–38 (TATKSTSSGS). The interval 29 to 64 (TATKSTSSGSVPSFFTESTSTPLNQSKTNTSTLNKS) is disordered. Positions 39–50 (VPSFFTESTSTP) are enriched in polar residues. A compositionally biased stretch (low complexity) spans 51 to 64 (LNQSKTNTSTLNKS).

This is an uncharacterized protein from Dictyostelium discoideum (Social amoeba).